The sequence spans 407 residues: tRNA (guanine(26)-N(2))-dimethyltransferase (407 aa).

A Trm1 methyltransferase domain is found at 10–400 (AVTHEGRSII…APWGEVLEAV (391 aa)). Residues Arg-50, Arg-82, Asp-99, and Glu-128 each coordinate S-adenosyl-L-methionine.

This sequence belongs to the class I-like SAM-binding methyltransferase superfamily. Trm1 family.

It carries out the reaction guanosine(26) in tRNA + 2 S-adenosyl-L-methionine = N(2)-dimethylguanosine(26) in tRNA + 2 S-adenosyl-L-homocysteine + 2 H(+). In terms of biological role, dimethylates a single guanine residue at position 26 of a number of tRNAs using S-adenosyl-L-methionine as donor of the methyl groups. This is tRNA (guanine(26)-N(2))-dimethyltransferase from Aeropyrum pernix (strain ATCC 700893 / DSM 11879 / JCM 9820 / NBRC 100138 / K1).